The primary structure comprises 153 residues: Small ribosomal subunit protein bS6 (153 aa).

The segment at 94–153 (EAHEEGPSAMMQKRDRDDRPRRDGDRPDRGPREDRGPRPPREGGFGDREDRPRRPREDRA) is disordered.

It belongs to the bacterial ribosomal protein bS6 family.

Functionally, binds together with bS18 to 16S ribosomal RNA. The protein is Small ribosomal subunit protein bS6 of Agrobacterium fabrum (strain C58 / ATCC 33970) (Agrobacterium tumefaciens (strain C58)).